We begin with the raw amino-acid sequence, 157 residues long: Arginine repressor (157 aa).

This sequence belongs to the ArgR family.

It localises to the cytoplasm. The protein operates within amino-acid biosynthesis; L-arginine biosynthesis [regulation]. Regulates arginine biosynthesis genes. The sequence is that of Arginine repressor from Colwellia psychrerythraea (strain 34H / ATCC BAA-681) (Vibrio psychroerythus).